The following is a 417-amino-acid chain: Argininosuccinate synthase (417 aa).

9 to 17 is an ATP binding site; the sequence is AYSGGLDTS. Residue Y87 participates in L-citrulline binding. Position 117 (G117) interacts with ATP. L-aspartate is bound by residues T119, N123, and D124. An L-citrulline-binding site is contributed by N123. L-citrulline-binding residues include R127, S175, S184, E260, and Y272.

The protein belongs to the argininosuccinate synthase family. Type 1 subfamily. As to quaternary structure, homotetramer.

The protein resides in the cytoplasm. The enzyme catalyses L-citrulline + L-aspartate + ATP = 2-(N(omega)-L-arginino)succinate + AMP + diphosphate + H(+). Its pathway is amino-acid biosynthesis; L-arginine biosynthesis; L-arginine from L-ornithine and carbamoyl phosphate: step 2/3. The polypeptide is Argininosuccinate synthase (Oceanobacillus iheyensis (strain DSM 14371 / CIP 107618 / JCM 11309 / KCTC 3954 / HTE831)).